We begin with the raw amino-acid sequence, 492 residues long: Catalase isozyme 1 (492 aa).

Residues His-65 and Asn-138 contribute to the active site. Tyr-348 contacts heme.

It belongs to the catalase family. As to quaternary structure, homotetramer. Heme is required as a cofactor. In terms of tissue distribution, high expression in seeds and early seedlings.

The protein resides in the glyoxysome. The catalysed reaction is 2 H2O2 = O2 + 2 H2O. In terms of biological role, occurs in almost all aerobically respiring organisms and serves to protect cells from the toxic effects of hydrogen peroxide. In Cucurbita pepo (Vegetable marrow), this protein is Catalase isozyme 1 (CAT1).